Here is a 188-residue protein sequence, read N- to C-terminus: Meiotically up-regulated gene 94 protein (188 aa).

It is found in the cytoplasm. It localises to the nucleus. Its function is as follows. Has a role in meiosis. This is Meiotically up-regulated gene 94 protein (mug94) from Schizosaccharomyces pombe (strain 972 / ATCC 24843) (Fission yeast).